A 589-amino-acid chain; its full sequence is Serine/threonine-protein phosphatase 2A 65 kDa regulatory subunit A alpha isoform (589 aa).

Alanine 2 is modified (N-acetylalanine). HEAT repeat units follow at residues 8–46 (DSLYPIAVLIDELRNEDVQLRLNSIKKLSTIALALGVER), 47–84 (TRSELLPFLTDTIYDEDEVLLALAEQLGTFTTLVGGPE), 85–123 (YVHCLLPPLESLATVEETVVRDKAVESLRAISHEHSPSD), 124–161 (LEAHFVPLVKRLAGGDWFTSRTSACGLFSVCYPRVSSA), 162–200 (VKAELRQYFRNLCSDDTPMVRRAAASKLGEFAKVLELDN), 201–239 (VKSEIIPMFSNLASDEQDSVRLLAVEACVNIAQLLPQED), 240–278 (LEALVMPTLRQAAEDKSWRVRYMVADKFTELQKAVGPEI), 279–321 (TKTD…RENV), 322–360 (IMSQILPCIKELVSDANQHVKSALASVIMGLSPILGKDN), 361–399 (TIEHLLPLFLAQLKDECPEVRLNIISNLDCVNEVIGIRQ), 400–438 (LSQSLLPAIVELAEDAKWRVRLAIIEYMPLLAGQLGVEF), 439–477 (FDEKLNSLCMAWLVDHVYAIREAATSNLKKLVEKFGKEW), 478–516 (AHATIIPKVLAMSGDPNYLHRMTTLFCINVLSEVCGQDI), 517–555 (TTKHMLPTVLRMAGDPVANVRFNVAKSLQKIGPILDNST), and 556–589 (LQSEVKPILEKLTQDQDVDVKYFAQEALTVLSLA). Positions 8-399 (DSLYPIAVLI…CVNEVIGIRQ (392 aa)) are PP2A subunit B binding. A polyoma small and medium T antigens Binding region spans residues 47 to 321 (TRSELLPFLT…NLSADCRENV (275 aa)). The interval 85-239 (YVHCLLPPLE…NIAQLLPQED (155 aa)) is SV40 small T antigen binding. Position 280 is an N6-acetyllysine (lysine 280). Residues 400 to 589 (LSQSLLPAIV…QEALTVLSLA (190 aa)) form a PP2A subunit C binding region.

It belongs to the phosphatase 2A regulatory subunit A family. PP2A consists of a common heterodimeric core enzyme, composed of PPP2CA a 36 kDa catalytic subunit (subunit C) and PPP2R1A a 65 kDa constant regulatory subunit (PR65 or subunit A), that associates with a variety of regulatory subunits. Proteins that associate with the core dimer include three families of regulatory subunits B (the R2/B/PR55/B55, R3/B''/PR72/PR130/PR59 and R5/B'/B56 families), the 48 kDa variable regulatory subunit, viral proteins, and cell signaling molecules. Found in a complex with at least ARL2, PPP2CB, PPP2R1A, PPP2R2A, PPP2R5E and TBCD. Interacts with the PP2A C catalytic subunit PPP2CA. Interacts with the PP2A B subunit PPP2R2A. Interacts with the PP2A B subunit PPP2R5D. Interacts with FOXO1; the interaction dephosphorylates FOXO1 on AKT-mediated phosphorylation sites. Interacts with IPO9. Interacts with TP53 and SGO1. Interacts with PLA2G16; this interaction might decrease PP2A activity. Interacts with CTTNBP2NL. Interacts with GNA12; the interaction promotes protein phosphatase 2A activation causing dephosphorylation of MAPT. Interacts with CIP2A; this interaction stabilizes CIP2A. Interacts with PABIR1/FAM122A. Interacts with ADCY8; antagonizes interaction between ADCY8 and calmodulin. Interacts with CRTC3 (when phosphorylated at 'Ser-391'). Interacts with SPRY2. Part of the core of STRIPAK complexes composed of PP2A catalytic and scaffolding subunits, the striatins (PP2A regulatory subunits), the striatin-associated proteins MOB4, STRIP1 and STRIP2, PDCD10 and members of the STE20 kinases, such as STK24 and STK26. Component of the Integrator-PP2A (INTAC) complex, composed of the Integrator core complex and protein phosphatase 2A subunits PPP2CA and PPP2R1A. In terms of assembly, (Microbial infection) Interacts with JC virus small t antigen; this interaction inhibits PPP2R1A activity.

It is found in the cytoplasm. Its subcellular location is the nucleus. It localises to the chromosome. The protein resides in the centromere. The protein localises to the lateral cell membrane. It is found in the cell projection. Its subcellular location is the dendrite. In terms of biological role, the PR65 subunit of protein phosphatase 2A serves as a scaffolding molecule to coordinate the assembly of the catalytic subunit and a variable regulatory B subunit. Upon interaction with GNA12 promotes dephosphorylation of microtubule associated protein TAU/MAPT. Required for proper chromosome segregation and for centromeric localization of SGO1 in mitosis. Together with RACK1 adapter, mediates dephosphorylation of AKT1 at 'Ser-473', preventing AKT1 activation and AKT-mTOR signaling pathway. Dephosphorylation of AKT1 is essential for regulatory T-cells (Treg) homeostasis and stability. Part of the striatin-interacting phosphatase and kinase (STRIPAK) complexes. STRIPAK complexes have critical roles in protein (de)phosphorylation and are regulators of multiple signaling pathways including Hippo, MAPK, nuclear receptor and cytoskeleton remodeling. Different types of STRIPAK complexes are involved in a variety of biological processes such as cell growth, differentiation, apoptosis, metabolism and immune regulation. Key mediator of a quality checkpoint during transcription elongation as part of the Integrator-PP2A (INTAC) complex. The INTAC complex drives premature transcription termination of transcripts that are unfavorably configured for transcriptional elongation: within the INTAC complex, acts as a scaffolding subunit for PPP2CA, which catalyzes dephosphorylation of the C-terminal domain (CTD) of Pol II subunit POLR2A/RPB1 and SUPT5H/SPT5, thereby preventing transcriptional elongation. Regulates the recruitment of the SKA complex to kinetochores. In Homo sapiens (Human), this protein is Serine/threonine-protein phosphatase 2A 65 kDa regulatory subunit A alpha isoform.